The chain runs to 574 residues: Squalene monooxygenase (574 aa).

Residues 1–20 are Cytoplasmic-facing; that stretch reads MWTFLGIATFTYFYKKFGDF. The segment at 1–100 is interaction with MARCHF6; it reads MWTFLGIATF…EQLEARRRRK (100 aa). Residues 21–41 lie within the membrane without spanning it; sequence ITLANREVLLCVLVFLSLGLV. Topologically, residues 42 to 574 are cytoplasmic; that stretch reads LSYRCRHRNG…IYSEMKYMVH (533 aa). The segment at 62-73 is required for degradation in response to high membrane cholesterol levels; the sequence is QFALFSDILSGL. The tract at residues 118 to 574 is sufficient for enzyme activity; the sequence is TSSQNDPEVI…IYSEMKYMVH (457 aa). FAD is bound by residues 133–134, 153–154, Arg-161, Phe-166, Arg-234, Val-250, Asp-408, and Met-421; these read VL and ER. The hydrophobic; mediates interaction with membranes stretch occupies residues 516-574; that stretch reads PLVLIGHFFAVAIYAVYFCFKSEPWITKPRALLSSGAVLYKACSVIFPLIYSEMKYMVH.

This sequence belongs to the squalene monooxygenase family. As to quaternary structure, interacts (via N-terminal domain) with MARCHF6. Interacts with SMIM22; this interaction modulates lipid droplet formation. Requires FAD as cofactor. Ubiquitinated by MARCHF6 in response to high cholesterol levels in intracellular membranes, leading to proteasomal degradation. In terms of tissue distribution, detected in liver (at protein level).

The protein localises to the microsome membrane. Its subcellular location is the endoplasmic reticulum membrane. The enzyme catalyses squalene + reduced [NADPH--hemoprotein reductase] + O2 = (S)-2,3-epoxysqualene + oxidized [NADPH--hemoprotein reductase] + H2O + H(+). The protein operates within terpene metabolism; lanosterol biosynthesis; lanosterol from farnesyl diphosphate: step 2/3. With respect to regulation, inhibited by NB-598 ((E)N-ethyl-N-(6,6-dimethyl-2-hepten-4-ynyl)-3-[(3,3'-bi-thiophen-5-yl)methoxy]benzene-methanamine). Contrary to fungal enzymes, the mammalian enzyme is only slightly inhibited by terbinafine. Inhibited by tellurite, tellurium dioxide, selenite, and selenium dioxide. Functionally, catalyzes the stereospecific oxidation of squalene to (S)-2,3-epoxysqualene, and is considered to be a rate-limiting enzyme in steroid biosynthesis. The protein is Squalene monooxygenase (SQLE) of Homo sapiens (Human).